Here is a 209-residue protein sequence, read N- to C-terminus: Eukaryotic translation initiation factor 4E (209 aa).

Residues 51–52 (WH), 97–98 (WE), and 153–158 (RKQAYR) contribute to the mRNA site.

The protein belongs to the eukaryotic initiation factor 4E family. In terms of assembly, eIF4F is a multi-subunit complex, the composition of which varies with external and internal environmental conditions. It is composed of at least eIF4A, eIF4E and eIF4G. eIF4E is also known to interact with other partners.

Recognizes and binds the 7-methylguanosine-containing mRNA cap during an early step in the initiation of protein synthesis and facilitates ribosome binding by inducing the unwinding of the mRNAs secondary structures. This chain is Eukaryotic translation initiation factor 4E (TIF45), found in Candida albicans (strain SC5314 / ATCC MYA-2876) (Yeast).